The sequence spans 146 residues: Ribosome-binding factor A (146 aa).

The tract at residues 127–146 (EFAGEADPYKKPEDDEAAES) is disordered.

Belongs to the RbfA family. As to quaternary structure, monomer. Binds 30S ribosomal subunits, but not 50S ribosomal subunits or 70S ribosomes.

The protein localises to the cytoplasm. Its function is as follows. One of several proteins that assist in the late maturation steps of the functional core of the 30S ribosomal subunit. Associates with free 30S ribosomal subunits (but not with 30S subunits that are part of 70S ribosomes or polysomes). Required for efficient processing of 16S rRNA. May interact with the 5'-terminal helix region of 16S rRNA. This is Ribosome-binding factor A from Renibacterium salmoninarum (strain ATCC 33209 / DSM 20767 / JCM 11484 / NBRC 15589 / NCIMB 2235).